Here is a 154-residue protein sequence, read N- to C-terminus: Myoglobin (154 aa).

Residues 2–148 (GLSDGEWQLV…FRNDMAAKYK (147 aa)) enclose the Globin domain. Ser4 is modified (phosphoserine). His65 contributes to the nitrite binding site. His65 lines the O2 pocket. Residue Thr68 is modified to Phosphothreonine. His94 provides a ligand contact to heme b.

Belongs to the globin family. Monomeric.

Its subcellular location is the cytoplasm. The protein localises to the sarcoplasm. The catalysed reaction is Fe(III)-heme b-[protein] + nitric oxide + H2O = Fe(II)-heme b-[protein] + nitrite + 2 H(+). It carries out the reaction H2O2 + AH2 = A + 2 H2O. Functionally, monomeric heme protein which primary function is to store oxygen and facilitate its diffusion within muscle tissues. Reversibly binds oxygen through a pentacoordinated heme iron and enables its timely and efficient release as needed during periods of heightened demand. Depending on the oxidative conditions of tissues and cells, and in addition to its ability to bind oxygen, it also has a nitrite reductase activity whereby it regulates the production of bioactive nitric oxide. Under stress conditions, like hypoxia and anoxia, it also protects cells against reactive oxygen species thanks to its pseudoperoxidase activity. The polypeptide is Myoglobin (MB) (Didelphis virginiana (North American opossum)).